The sequence spans 118 residues: MTGEYRMAKDIGLGVKPPRRECDDPNCPFHGNLRVRGMILEGVVVSDRMDKTVIVEREYYRYDRKYERWERRRSRIPAHNPPCIDAQEGDKVRIAECRPLSKTKSFVVIEVLERAQER.

It belongs to the universal ribosomal protein uS17 family. In terms of assembly, part of the 30S ribosomal subunit.

In terms of biological role, one of the primary rRNA binding proteins, it binds specifically to the 5'-end of 16S ribosomal RNA. The sequence is that of Small ribosomal subunit protein uS17 from Methanopyrus kandleri (strain AV19 / DSM 6324 / JCM 9639 / NBRC 100938).